The chain runs to 345 residues: Adenine deaminase (345 aa).

Histidine 20, histidine 22, and histidine 204 together coordinate Zn(2+). Glutamate 207 (proton donor) is an active-site residue. Aspartate 285 lines the Zn(2+) pocket. A substrate-binding site is contributed by aspartate 286.

This sequence belongs to the metallo-dependent hydrolases superfamily. Adenosine and AMP deaminases family. Adenine deaminase type 2 subfamily. The cofactor is Zn(2+).

It catalyses the reaction adenine + H2O + H(+) = hypoxanthine + NH4(+). Catalyzes the hydrolytic deamination of adenine to hypoxanthine. Plays an important role in the purine salvage pathway and in nitrogen catabolism. This is Adenine deaminase from Ralstonia pickettii (strain 12J).